The sequence spans 338 residues: Holliday junction branch migration complex subunit RuvB (338 aa).

Residues 1–181 (MEERILTQNF…FGVINRLDYY (181 aa)) are large ATPase domain (RuvB-L). Residues leucine 20, arginine 21, glycine 62, lysine 65, threonine 66, threonine 67, 128–130 (EDF), arginine 171, tyrosine 181, and arginine 218 each bind ATP. Threonine 66 contributes to the Mg(2+) binding site. Residues 182-252 (SVEELKEIIK…TSKEALDVLG (71 aa)) form a small ATPAse domain (RuvB-S) region. A head domain (RuvB-H) region spans residues 255 to 338 (EIGLEYIDRK…YIEQGRIEGV (84 aa)). DNA-binding residues include arginine 310 and arginine 315.

Belongs to the RuvB family. Homohexamer. Forms an RuvA(8)-RuvB(12)-Holliday junction (HJ) complex. HJ DNA is sandwiched between 2 RuvA tetramers; dsDNA enters through RuvA and exits via RuvB. An RuvB hexamer assembles on each DNA strand where it exits the tetramer. Each RuvB hexamer is contacted by two RuvA subunits (via domain III) on 2 adjacent RuvB subunits; this complex drives branch migration. In the full resolvosome a probable DNA-RuvA(4)-RuvB(12)-RuvC(2) complex forms which resolves the HJ.

It is found in the cytoplasm. The catalysed reaction is ATP + H2O = ADP + phosphate + H(+). Its function is as follows. The RuvA-RuvB-RuvC complex processes Holliday junction (HJ) DNA during genetic recombination and DNA repair, while the RuvA-RuvB complex plays an important role in the rescue of blocked DNA replication forks via replication fork reversal (RFR). RuvA specifically binds to HJ cruciform DNA, conferring on it an open structure. The RuvB hexamer acts as an ATP-dependent pump, pulling dsDNA into and through the RuvAB complex. RuvB forms 2 homohexamers on either side of HJ DNA bound by 1 or 2 RuvA tetramers; 4 subunits per hexamer contact DNA at a time. Coordinated motions by a converter formed by DNA-disengaged RuvB subunits stimulates ATP hydrolysis and nucleotide exchange. Immobilization of the converter enables RuvB to convert the ATP-contained energy into a lever motion, pulling 2 nucleotides of DNA out of the RuvA tetramer per ATP hydrolyzed, thus driving DNA branch migration. The RuvB motors rotate together with the DNA substrate, which together with the progressing nucleotide cycle form the mechanistic basis for DNA recombination by continuous HJ branch migration. Branch migration allows RuvC to scan DNA until it finds its consensus sequence, where it cleaves and resolves cruciform DNA. The polypeptide is Holliday junction branch migration complex subunit RuvB (Thermoanaerobacter pseudethanolicus (strain ATCC 33223 / 39E) (Clostridium thermohydrosulfuricum)).